The sequence spans 125 residues: Ribonuclease P protein component 1 (125 aa).

The segment covering 1-13 has biased composition (basic and acidic residues); that stretch reads MRRNGKEGKDRAP. The tract at residues 1-24 is disordered; it reads MRRNGKEGKDRAPGRPQRKGQEVA.

This sequence belongs to the eukaryotic/archaeal RNase P protein component 1 family. As to quaternary structure, consists of a catalytic RNA component and at least 4-5 protein subunits.

The protein resides in the cytoplasm. The enzyme catalyses Endonucleolytic cleavage of RNA, removing 5'-extranucleotides from tRNA precursor.. Part of ribonuclease P, a protein complex that generates mature tRNA molecules by cleaving their 5'-ends. This is Ribonuclease P protein component 1 from Thermococcus onnurineus (strain NA1).